Here is a 390-residue protein sequence, read N- to C-terminus: Phosphopentomutase (390 aa).

Mn(2+)-binding residues include D14, D286, H291, D327, H328, and H339.

The protein belongs to the phosphopentomutase family. Requires Mn(2+) as cofactor.

It localises to the cytoplasm. It catalyses the reaction 2-deoxy-alpha-D-ribose 1-phosphate = 2-deoxy-D-ribose 5-phosphate. The enzyme catalyses alpha-D-ribose 1-phosphate = D-ribose 5-phosphate. It participates in carbohydrate degradation; 2-deoxy-D-ribose 1-phosphate degradation; D-glyceraldehyde 3-phosphate and acetaldehyde from 2-deoxy-alpha-D-ribose 1-phosphate: step 1/2. Functionally, isomerase that catalyzes the conversion of deoxy-ribose 1-phosphate (dRib-1-P) and ribose 1-phosphate (Rib-1-P) to deoxy-ribose 5-phosphate (dRib-5-P) and ribose 5-phosphate (Rib-5-P), respectively. In Exiguobacterium sibiricum (strain DSM 17290 / CCUG 55495 / CIP 109462 / JCM 13490 / 255-15), this protein is Phosphopentomutase.